A 221-amino-acid polypeptide reads, in one-letter code: PKHD-type hydroxylase PMT9312_1262 (221 aa).

The region spanning 80 to 174 (IIHGIMFTKS…RLVCVGWIES (95 aa)) is the Fe2OG dioxygenase domain. Fe cation contacts are provided by His98, Asp100, and His155. Arg165 lines the 2-oxoglutarate pocket.

The cofactor is Fe(2+). L-ascorbate is required as a cofactor.

This chain is PKHD-type hydroxylase PMT9312_1262, found in Prochlorococcus marinus (strain MIT 9312).